The primary structure comprises 1057 residues: Carbamoyl phosphate synthase large chain (1057 aa).

The segment at 1–401 (MPKRQDIETI…SLLKAIRSLE (401 aa)) is carboxyphosphate synthetic domain. 12 residues coordinate ATP: arginine 129, arginine 169, glycine 175, glycine 176, lysine 208, isoleucine 210, glutamate 215, glycine 241, isoleucine 242, histidine 243, glutamine 284, and glutamate 298. One can recognise an ATP-grasp 1 domain in the interval 133 to 327 (RTLMNDLGVP…IAKLAAKIAI (195 aa)). Mg(2+) is bound by residues glutamine 284, glutamate 298, and asparagine 300. Mn(2+) contacts are provided by glutamine 284, glutamate 298, and asparagine 300. Residues 402–546 (YGVHHLGLPN…YGTYEYENES (145 aa)) are oligomerization domain. The interval 547–929 (VVTEKEKILV…ALFKGLTASG (383 aa)) is carbamoyl phosphate synthetic domain. In terms of domain architecture, ATP-grasp 2 spans 671–861 (EALLHTIDVP…MAQLAMRAII (191 aa)). ATP-binding residues include arginine 707, arginine 746, leucine 748, glutamate 752, glycine 777, valine 778, histidine 779, serine 780, glutamine 820, and glutamate 832. Positions 820, 832, and 834 each coordinate Mg(2+). Positions 820, 832, and 834 each coordinate Mn(2+). In terms of domain architecture, MGS-like spans 930-1057 (MEVKDHGTVL…ESMTFTMKNM (128 aa)). The interval 930–1057 (MEVKDHGTVL…ESMTFTMKNM (128 aa)) is allosteric domain.

It belongs to the CarB family. As to quaternary structure, composed of two chains; the small (or glutamine) chain promotes the hydrolysis of glutamine to ammonia, which is used by the large (or ammonia) chain to synthesize carbamoyl phosphate. Tetramer of heterodimers (alpha,beta)4. Requires Mg(2+) as cofactor. The cofactor is Mn(2+).

It carries out the reaction hydrogencarbonate + L-glutamine + 2 ATP + H2O = carbamoyl phosphate + L-glutamate + 2 ADP + phosphate + 2 H(+). The catalysed reaction is hydrogencarbonate + NH4(+) + 2 ATP = carbamoyl phosphate + 2 ADP + phosphate + 2 H(+). The protein operates within amino-acid biosynthesis; L-arginine biosynthesis; carbamoyl phosphate from bicarbonate: step 1/1. It functions in the pathway pyrimidine metabolism; UMP biosynthesis via de novo pathway; (S)-dihydroorotate from bicarbonate: step 1/3. Large subunit of the glutamine-dependent carbamoyl phosphate synthetase (CPSase). CPSase catalyzes the formation of carbamoyl phosphate from the ammonia moiety of glutamine, carbonate, and phosphate donated by ATP, constituting the first step of 2 biosynthetic pathways, one leading to arginine and/or urea and the other to pyrimidine nucleotides. The large subunit (synthetase) binds the substrates ammonia (free or transferred from glutamine from the small subunit), hydrogencarbonate and ATP and carries out an ATP-coupled ligase reaction, activating hydrogencarbonate by forming carboxy phosphate which reacts with ammonia to form carbamoyl phosphate. The polypeptide is Carbamoyl phosphate synthase large chain (Staphylococcus saprophyticus subsp. saprophyticus (strain ATCC 15305 / DSM 20229 / NCIMB 8711 / NCTC 7292 / S-41)).